The sequence spans 178 residues: Peptidyl-prolyl cis-trans isomerase H (178 aa).

Positions 14-177 (FFDISIGDVP…LPVKITECGQ (164 aa)) constitute a PPIase cyclophilin-type domain.

Belongs to the cyclophilin-type PPIase family. PPIase H subfamily.

It localises to the nucleus. It carries out the reaction [protein]-peptidylproline (omega=180) = [protein]-peptidylproline (omega=0). In terms of biological role, PPIases accelerate the folding of proteins. It catalyzes the cis-trans isomerization of proline imidic peptide bonds in oligopeptides. The sequence is that of Peptidyl-prolyl cis-trans isomerase H (cyp7) from Rhizopus delemar (strain RA 99-880 / ATCC MYA-4621 / FGSC 9543 / NRRL 43880) (Mucormycosis agent).